The chain runs to 377 residues: 23S rRNA (uracil(747)-C(5))-methyltransferase RlmC (377 aa).

Positions 3, 11, 14, and 87 each coordinate [4Fe-4S] cluster. S-adenosyl-L-methionine is bound by residues Q212, F241, E262, and N307. The active-site Nucleophile is C334.

This sequence belongs to the class I-like SAM-binding methyltransferase superfamily. RNA M5U methyltransferase family. RlmC subfamily.

The catalysed reaction is uridine(747) in 23S rRNA + S-adenosyl-L-methionine = 5-methyluridine(747) in 23S rRNA + S-adenosyl-L-homocysteine + H(+). Functionally, catalyzes the formation of 5-methyl-uridine at position 747 (m5U747) in 23S rRNA. The protein is 23S rRNA (uracil(747)-C(5))-methyltransferase RlmC of Xenorhabdus bovienii (strain SS-2004) (Xenorhabdus nematophila subsp. bovienii).